Consider the following 160-residue polypeptide: Transcription antitermination protein NusB (160 aa).

This sequence belongs to the NusB family.

Involved in transcription antitermination. Required for transcription of ribosomal RNA (rRNA) genes. Binds specifically to the boxA antiterminator sequence of the ribosomal RNA (rrn) operons. This Sinorhizobium fredii (strain NBRC 101917 / NGR234) protein is Transcription antitermination protein NusB.